We begin with the raw amino-acid sequence, 348 residues long: Rhodopsin (348 aa).

Methionine 1 carries the N-acetylmethionine modification. Over 1–36 (MNGTEGPNFYVPFSNATGVVRSPFEYPQYYLAEPWQ) the chain is Extracellular. 2 N-linked (GlcNAc...) asparagine glycosylation sites follow: asparagine 2 and asparagine 15. A helical transmembrane segment spans residues 37 to 61 (FSMLAAYMFMLIVLGFPINFLTLYV). At 62-73 (TVQHKKLRTPLN) the chain is on the cytoplasmic side. The helical transmembrane segment at 74–96 (YILLNLAVADLFMVFGGFTTTLY) threads the bilayer. The Extracellular portion of the chain corresponds to 97 to 110 (TSLHGYFVFGPTGC). Cysteines 110 and 187 form a disulfide. Residues 111 to 133 (NLEGFFATLGGEIALWSLVVLAI) form a helical membrane-spanning segment. Positions 134–136 (ERY) match the 'Ionic lock' involved in activated form stabilization motif. Residues 134-152 (ERYVVVCKPMSNFRFGENH) lie on the Cytoplasmic side of the membrane. Residues 153-173 (AIMGLVFTWIMALACAAPPLV) form a helical membrane-spanning segment. Topologically, residues 174–202 (GWSRYIPEGMQCSCGIDYYTLKPEVNNES) are extracellular. A Zn(2+)-binding site is contributed by glutamate 201. A helical transmembrane segment spans residues 203–224 (FVIYMFVVHFFIPLFVIFFCYG). Residues 225-252 (QLVFTVKEAAAQQQESATTQKAEKEVTR) are Cytoplasmic-facing. Residues 253–274 (MVIIMVIAFLICWLPYAGVAFY) form a helical membrane-spanning segment. Topologically, residues 275–286 (IFTHQGSNFGPI) are extracellular. Residue glutamine 279 coordinates Zn(2+). Residues 287–308 (FMTLPAFFAKTASIYNPVIYIM) traverse the membrane as a helical segment. Lysine 296 is subject to N6-(retinylidene)lysine. Residues 309 to 348 (MNKQFRTCMITTLCCGKNPLGDDEASTTASKTETSQVAPA) are Cytoplasmic-facing. S-palmitoyl cysteine attachment occurs at residues cysteine 322 and cysteine 323. The interaction with SAG stretch occupies residues 330–348 (DDEASTTASKTETSQVAPA). A Phosphoserine modification is found at serine 334. 2 positions are modified to phosphothreonine: threonine 335 and threonine 336. Serine 338 carries the post-translational modification Phosphoserine. 2 positions are modified to phosphothreonine: threonine 340 and threonine 342. Serine 343 is subject to Phosphoserine.

The protein belongs to the G-protein coupled receptor 1 family. Opsin subfamily. As to quaternary structure, homodimer. May form a complex composed of RHO, GRK1 and RCVRN in a Ca(2+)-dependent manner; RCVRN prevents the interaction between GRK1 and RHO. Interacts with GRK1. Interacts (phosphorylated form) with SAG. Interacts with GNAT1. Interacts with GNAT3. SAG and G-proteins compete for a common binding site. Interacts with PRCD; the interaction promotes PRCD stability. Forms a complex with ASAP1 and ARF4. Forms a complex with ASAP1, RAB11A, Rabin8/RAB3IP, ARF4 and RAB11FIP3; the complex regulates Golgi-to-cilia rhodopsin/RHO transport in photoreceptors. Post-translationally, phosphorylated on some or all of the serine and threonine residues present in the C-terminal region. In terms of processing, contains one covalently linked retinal chromophore. Upon light absorption, the covalently bound 11-cis-retinal is converted to all-trans-retinal. After hydrolysis of the Schiff base and release of the covalently bound all-trans-retinal, active rhodopsin is regenerated by binding of a fresh molecule of 11-cis-retinal.

Its subcellular location is the membrane. The protein localises to the cell projection. The protein resides in the cilium. It localises to the photoreceptor outer segment. Photoreceptor required for image-forming vision at low light intensity. Required for photoreceptor cell viability after birth. Light-induced isomerization of 11-cis to all-trans retinal triggers a conformational change that activates signaling via G-proteins. Subsequent receptor phosphorylation mediates displacement of the bound G-protein alpha subunit by the arrestin SAG and terminates signaling. The chain is Rhodopsin (RHO) from Otolemur crassicaudatus (Brown greater galago).